The chain runs to 754 residues: Exocyst complex component EXO84A (754 aa).

Disordered stretches follow at residues 514 to 540 (RILP…EQRE) and 734 to 754 (GHGE…YTSN). A compositionally biased stretch (polar residues) spans 518-527 (QGTSQSTPRR). Over residues 528 to 540 (GSSDRQNRPEQRE) the composition is skewed to basic and acidic residues. The span at 741–754 (TSPSVSSAKSYTSN) shows a compositional bias: polar residues.

It belongs to the EXO84 family. The exocyst complex is composed of SEC3, SEC5, SEC6, SEC8, SEC10, EXO70A1 and EXO84.

Component of the exocyst complex involved in the docking of exocytic vesicles with fusion sites on the plasma membrane during regulated or polarized secretion. Involved in polarized cell growth and organ morphogenesis. During cytokinesis, involved in cell plate initiation, cell plate maturation and formation of new primary cell wall. The protein is Exocyst complex component EXO84A (EXO84A) of Arabidopsis thaliana (Mouse-ear cress).